The chain runs to 118 residues: ATP synthase subunit g, mitochondrial (118 aa).

In terms of assembly, F-type ATP synthases have 2 components, the catalytic core F(1) and the membrane-embedded component F(0), linked together by a central stalk and a peripheral stalk. The central stalk, also called rotor shaft, is often seen as part of F(1). The peripheral stalk is seen as part of F(0). F(0) contains the membrane channel next to the rotor. F-type ATP synthases form dimers but each monomer functions independently in ATP generation. The dimer consists of 18 different polypeptides: ATP1 (subunit alpha, part of F(1), 3 molecules per monomer), ATP2 (subunit beta, part of F(1), 3 molecules per monomer), ATP3 (subunit gamma, part of the central stalk), ATP4 (subunit b, part of the peripheral stalk), ATP5/OSCP (subunit 5/OSCP, part of the peripheral stalk), ATP6 (subunit a, part of the peripheral stalk), ATP7 (subunit d, part of the peripheral stalk), ATP8 (subunit 8, part of the peripheral stalk), OLI1 (subunit c, part of the rotor, 10 molecules per monomer), ATP14 (subunit h, part of the peripheral stalk), ATP15 (subunit epsilon, part of the central stalk), ATP16 (subunit delta, part of the central stalk), ATP17 (subunit f, part of the peripheral stalk), ATP18 (subunit i/j, part of the peripheral stalk). Dimer-specific subunits are ATP19 (subunit k, at interface between monomers), ATP20 (subunit g, at interface between monomers), TIM11 (subunit e, at interface between monomers). Also contains subunit L.

The protein resides in the mitochondrion inner membrane. Mitochondrial membrane ATP synthase (F(1)F(0) ATP synthase or Complex V) produces ATP from ADP in the presence of a proton gradient across the membrane which is generated by electron transport complexes of the respiratory chain. F-type ATP synthases consist of two structural domains, F(1) - containing the extramembraneous catalytic core, and F(0) - containing the membrane proton channel, linked together by a central stalk and a peripheral stalk. During catalysis, ATP synthesis in the catalytic domain of F(1) is coupled via a rotary mechanism of the central stalk subunits to proton translocation. Part of the complex F(0) domain Minor subunit located with subunit a/ATP6 in the membrane. Together with subunit e/TIM11, probably contributes to membrane curvature at the site of the ATP synthase dimer, ultimately contributing to formation of cristae. The sequence is that of ATP synthase subunit g, mitochondrial from Pichia angusta (Yeast).